The sequence spans 517 residues: Putative pumilio homolog 21 (517 aa).

4 disordered regions span residues 33–57, 69–94, 107–130, and 175–201; these read NHQE…PPLL, KNNQ…PPLV, NHQE…PLLT, and FTPS…PPLS. Residues 42–51 are compositionally biased toward low complexity; the sequence is NTNINSNNNH. Over residues 69 to 84 the composition is skewed to polar residues; sequence KNNQEPGESGNTTINR. Positions 148–502 constitute a PUM-HD domain; it reads ESSNNNYPNL…NTLRVIQEEI (355 aa). The span at 177–190 shows a compositional bias: polar residues; the sequence is PSSLTQPDDSSSRY. The stretch at 258-293 is one Pumilio 1; degenerate repeat; the sequence is TTKRIFLHLATNQYGSQALRILFRRSPSLDHLLFCA. One copy of the Pumilio 2 repeat lies at 294 to 328; sequence VDTNFFLLMSDKYGRGLIIPAIRAVDKTKKESLYK. One copy of the Pumilio 3; degenerate repeat lies at 329-363; that stretch reads LTYEYTLHLARLETGCLALNNVLQEIRGIYRDLIF. Pumilio repeat units follow at residues 364–400, 401–437, and 438–473; these read ECVA…AIAE, RLRG…EEFR, and GNAK…PLLR.

The protein localises to the cytoplasm. Functionally, sequence-specific RNA-binding protein that regulates translation and mRNA stability by binding the 3'-UTR of target mRNAs. The protein is Putative pumilio homolog 21 (APUM21) of Arabidopsis thaliana (Mouse-ear cress).